The sequence spans 434 residues: Tol-Pal system protein TolB (434 aa).

An N-terminal signal peptide occupies residues 1–24 (MKFSAYLTTLFIVLFSLFIQTVQA).

Belongs to the TolB family. The Tol-Pal system is composed of five core proteins: the inner membrane proteins TolA, TolQ and TolR, the periplasmic protein TolB and the outer membrane protein Pal. They form a network linking the inner and outer membranes and the peptidoglycan layer.

Its subcellular location is the periplasm. Its function is as follows. Part of the Tol-Pal system, which plays a role in outer membrane invagination during cell division and is important for maintaining outer membrane integrity. The polypeptide is Tol-Pal system protein TolB (Histophilus somni (strain 2336) (Haemophilus somnus)).